Consider the following 659-residue polypeptide: Ion-translocating oxidoreductase complex subunit C (659 aa).

2 4Fe-4S ferredoxin-type domains span residues 366 to 397 (TEMG…QQLY) and 407 to 436 (KARN…VQYY). [4Fe-4S] cluster is bound by residues Cys377, Cys380, Cys383, Cys387, Cys416, Cys419, Cys422, and Cys426.

It belongs to the 4Fe4S bacterial-type ferredoxin family. RnfC subfamily. As to quaternary structure, the complex is composed of six subunits: RnfA, RnfB, RnfC, RnfD, RnfE and RnfG. It depends on [4Fe-4S] cluster as a cofactor.

It localises to the cell inner membrane. In terms of biological role, part of a membrane-bound complex that couples electron transfer with translocation of ions across the membrane. In Yersinia pestis bv. Antiqua (strain Nepal516), this protein is Ion-translocating oxidoreductase complex subunit C.